The primary structure comprises 79 residues: MADFEARVKEIIVEQLGVDPAEVVTGASFVNDLGADSLDTVELVMAFEEKFGIEIPDEEAEKIQTVGSAIDYVKTHVRK.

Residues 2 to 77 (ADFEARVKEI…SAIDYVKTHV (76 aa)) form the Carrier domain. The residue at position 37 (serine 37) is an O-(pantetheine 4'-phosphoryl)serine.

This sequence belongs to the acyl carrier protein (ACP) family. In terms of processing, 4'-phosphopantetheine is transferred from CoA to a specific serine of apo-ACP by AcpS. This modification is essential for activity because fatty acids are bound in thioester linkage to the sulfhydryl of the prosthetic group.

Its subcellular location is the cytoplasm. Its pathway is lipid metabolism; fatty acid biosynthesis. In terms of biological role, carrier of the growing fatty acid chain in fatty acid biosynthesis. This is Acyl carrier protein from Endomicrobium trichonymphae.